Here is a 461-residue protein sequence, read N- to C-terminus: UDP-N-acetylmuramoylalanine--D-glutamate ligase (461 aa).

ATP is bound at residue 115 to 121 (GSNGKTT).

It belongs to the MurCDEF family.

The protein localises to the cytoplasm. It carries out the reaction UDP-N-acetyl-alpha-D-muramoyl-L-alanine + D-glutamate + ATP = UDP-N-acetyl-alpha-D-muramoyl-L-alanyl-D-glutamate + ADP + phosphate + H(+). It functions in the pathway cell wall biogenesis; peptidoglycan biosynthesis. Functionally, cell wall formation. Catalyzes the addition of glutamate to the nucleotide precursor UDP-N-acetylmuramoyl-L-alanine (UMA). The sequence is that of UDP-N-acetylmuramoylalanine--D-glutamate ligase from Acidobacterium capsulatum (strain ATCC 51196 / DSM 11244 / BCRC 80197 / JCM 7670 / NBRC 15755 / NCIMB 13165 / 161).